The primary structure comprises 430 residues: Cyclin-A2 (430 aa).

N-acetylmethionine is present on Met-1. Disordered regions lie at residues 1–80 (MLGS…PIND) and 106–129 (EEIQ…FNSA). Ser-5 bears the Phosphoserine mark. Over residues 107 to 120 (EIQKRPTESKKSES) the composition is skewed to basic and acidic residues.

The protein belongs to the cyclin family. Cyclin AB subfamily. Interacts with the CDK1 and CDK2 protein kinases to form serine/threonine kinase holoenzyme complexes. Interacts with CDK1 (hyperphosphorylated form in G1 and underphosphorylated forms in S and G2). Interacts with CDK2; the interaction increases from G1 to G2. Interacts (associated with CDK2 but not with CDK1) with SCAPER; regulates the activity of CCNA2/CDK2 by transiently maintaining CCNA2 in the cytoplasm. Forms a ternary complex with CDK2 and CDKN1B; CDKN1B inhibits the kinase activity of CDK2 through conformational rearrangements. Interacts with INCA1. Polyubiquitinated via 'Lys-11'-linked ubiquitin by the anaphase-promoting complex (APC/C), leading to its degradation by the proteasome. Deubiquitinated and stabilized by USP37 enables entry into S phase. Ubiquitinated during the G1 phase by the SCF(FBXO31) complex, leading to its proteasomal degradation.

Its subcellular location is the nucleus. It is found in the cytoplasm. Functionally, cyclin which controls both the G1/S and the G2/M transition phases of the cell cycle. Functions through the formation of specific serine/threonine kinase holoenzyme complexes with the cyclin-dependent protein kinases CDK1 and CDK2. The cyclin subunit confers the substrate specificity of these complexes and differentially interacts with and activates CDK1 and CDK2 throughout the cell cycle. In Bos taurus (Bovine), this protein is Cyclin-A2.